The chain runs to 333 residues: Low specificity L-threonine aldolase (333 aa).

Lysine 197 bears the N6-(pyridoxal phosphate)lysine mark.

Belongs to the threonine aldolase family. Homotetramer. The cofactor is pyridoxal 5'-phosphate.

It catalyses the reaction L-threonine = acetaldehyde + glycine. It carries out the reaction L-allo-threonine = acetaldehyde + glycine. Functionally, catalyzes the cleavage of L-allo-threonine and L-threonine to glycine and acetaldehyde. L-threo-phenylserine and L-erythro-phenylserine are also good substrates. In Escherichia coli (strain K12), this protein is Low specificity L-threonine aldolase (ltaE).